The following is a 261-amino-acid chain: Short chain dehydrogenase/reductase astE (261 aa).

The NADP(+) site is built by isoleucine 24, aspartate 70, asparagine 97, and lysine 131. Catalysis depends on proton donor residues serine 150 and tyrosine 164. 4 residues coordinate NADP(+): tyrosine 164, lysine 168, valine 197, and threonine 199. The active-site Lowers pKa of active site Tyr is the lysine 168.

It belongs to the short-chain dehydrogenases/reductases (SDR) family.

It participates in secondary metabolite biosynthesis; terpenoid biosynthesis. Short chain dehydrogenase/reductase; part of the gene cluster that mediates the biosynthesis of astellolides, drimane-type sesquiterpene esters that show antimicrobial, anti-inflammatory, and anti-tumor activities. The first step in astellolide biosynthesis is performed by the sesquiterpene cyclase astC that catalyzes the formation of drimanyl pyrophosphate from farnesyl pyrophosphate. Drimanyl pyrophosphate is then dephosphorylated by the sesquiterpene phosphatase astI to produce drimanyl monophosphate which is further dephosphorylated to drim-8-ene-11-ol by atsK. Drim-8-ene-11-ol is converted to confertifolin, probably by the cytochrome P450 monooxygenase astD and/or the dehydrogenase astE. The cytochrome P450 monooxygenases astB, astF and astJ then hydroxylate confertifolin at C6, C14, or C15 to form trihydroxy confertifolin. The nonribosomal peptide synthetase astA catalyzes ester bond formation between trihydroxy contifolin and benzoic acid (BA) or 4-hydroxy benzoic acid (4HBA), leading to the formation of dideacetyl astellolides A and B, respectively. Finally, the O-acetyltransferase astG converts dideacetyl astellolides A and B into deacetyl astellolides A and B. The polypeptide is Short chain dehydrogenase/reductase astE (Aspergillus oryzae (strain ATCC 42149 / RIB 40) (Yellow koji mold)).